The sequence spans 432 residues: Serine--tRNA ligase (432 aa).

236–238 (TSE) provides a ligand contact to L-serine. 267-269 (RSE) provides a ligand contact to ATP. Glu290 contacts L-serine. 354-357 (EISS) is an ATP binding site. Ser390 is a binding site for L-serine.

Belongs to the class-II aminoacyl-tRNA synthetase family. Type-1 seryl-tRNA synthetase subfamily. As to quaternary structure, homodimer. The tRNA molecule binds across the dimer.

Its subcellular location is the cytoplasm. The catalysed reaction is tRNA(Ser) + L-serine + ATP = L-seryl-tRNA(Ser) + AMP + diphosphate + H(+). It carries out the reaction tRNA(Sec) + L-serine + ATP = L-seryl-tRNA(Sec) + AMP + diphosphate + H(+). It participates in aminoacyl-tRNA biosynthesis; selenocysteinyl-tRNA(Sec) biosynthesis; L-seryl-tRNA(Sec) from L-serine and tRNA(Sec): step 1/1. Its function is as follows. Catalyzes the attachment of serine to tRNA(Ser). Is also able to aminoacylate tRNA(Sec) with serine, to form the misacylated tRNA L-seryl-tRNA(Sec), which will be further converted into selenocysteinyl-tRNA(Sec). This is Serine--tRNA ligase from Pseudoalteromonas atlantica (strain T6c / ATCC BAA-1087).